Reading from the N-terminus, the 445-residue chain is Phosphoglucosamine mutase (445 aa).

Residue Ser-102 is the Phosphoserine intermediate of the active site. Residues Ser-102, Asp-241, Asp-243, and Asp-245 each coordinate Mg(2+). The residue at position 102 (Ser-102) is a Phosphoserine.

It belongs to the phosphohexose mutase family. It depends on Mg(2+) as a cofactor. In terms of processing, activated by phosphorylation.

It carries out the reaction alpha-D-glucosamine 1-phosphate = D-glucosamine 6-phosphate. In terms of biological role, catalyzes the conversion of glucosamine-6-phosphate to glucosamine-1-phosphate. This chain is Phosphoglucosamine mutase, found in Aliivibrio fischeri (strain ATCC 700601 / ES114) (Vibrio fischeri).